A 58-amino-acid chain; its full sequence is Metallothionein-2B (58 aa).

Residues 1 to 29 (MPDPCCNDKCECKEGECKTGCKCKSCRCP) are beta. Cysteine 5, cysteine 6, cysteine 10, cysteine 12, cysteine 17, cysteine 21, cysteine 23, cysteine 26, cysteine 28, cysteine 31, cysteine 34, cysteine 38, cysteine 40, cysteine 46, cysteine 50, cysteine 54, cysteine 56, and cysteine 57 together coordinate a divalent metal cation. The interval 30–58 (PCDKCSSECKCTSKEECSKTCSKPCSCCP) is alpha.

The protein belongs to the metallothionein superfamily. Type 3 family.

In terms of biological role, binds six divalent metal ions. Known to bind copper and cadmium. In Callinectes sapidus (Blue crab), this protein is Metallothionein-2B.